Reading from the N-terminus, the 604-residue chain is Glutamine--fructose-6-phosphate aminotransferase [isomerizing] (604 aa).

C2 serves as the catalytic Nucleophile; for GATase activity. The region spanning 2 to 218 (CGIVGVVGNT…DKELVIVKKD (217 aa)) is the Glutamine amidotransferase type-2 domain. SIS domains are found at residues 284–423 (IIKS…ANGK) and 456–594 (VEQL…VDKP). The active-site For Fru-6P isomerization activity is the K599.

As to quaternary structure, homodimer.

It is found in the cytoplasm. It carries out the reaction D-fructose 6-phosphate + L-glutamine = D-glucosamine 6-phosphate + L-glutamate. In terms of biological role, catalyzes the first step in hexosamine metabolism, converting fructose-6P into glucosamine-6P using glutamine as a nitrogen source. In Streptococcus agalactiae serotype III (strain NEM316), this protein is Glutamine--fructose-6-phosphate aminotransferase [isomerizing].